The following is a 357-amino-acid chain: 3-isopropylmalate dehydrogenase, chloroplastic (357 aa).

The transit peptide at Met-1–Thr-29 directs the protein to the chloroplast. The substrate site is built by Arg-120, Arg-130, Arg-151, and Asp-238. Mg(2+) contacts are provided by Asp-238, Asp-262, and Asp-266. Gly-296–Asn-308 lines the NAD(+) pocket.

It belongs to the isocitrate and isopropylmalate dehydrogenases family. In terms of assembly, homodimer. It depends on Mg(2+) as a cofactor. Mn(2+) is required as a cofactor.

The protein resides in the plastid. Its subcellular location is the chloroplast. The catalysed reaction is (2R,3S)-3-isopropylmalate + NAD(+) = 4-methyl-2-oxopentanoate + CO2 + NADH. Its pathway is amino-acid biosynthesis; L-leucine biosynthesis; L-leucine from 3-methyl-2-oxobutanoate: step 3/4. Its function is as follows. Catalyzes the oxidation of 3-carboxy-2-hydroxy-4-methylpentanoate (3-isopropylmalate) to 3-carboxy-4-methyl-2-oxopentanoate. The product decarboxylates to 4-methyl-2 oxopentanoate. This is 3-isopropylmalate dehydrogenase, chloroplastic from Solanum tuberosum (Potato).